Here is a 614-residue protein sequence, read N- to C-terminus: Major facilitator superfamily domain-containing protein 6-like protein B (614 aa).

2 helical membrane-spanning segments follow: residues 41–61 (LGLG…VHLL) and 78–98 (FFIM…AFYP). Residues 177–191 (HQRFTDQFPSSSPLT) show a composition bias toward polar residues. The interval 177–243 (HQRFTDQFPS…PFATHPNVSH (67 aa)) is disordered. The span at 205–227 (GSGKAQKANSSKSSASNSKQRSS) shows a compositional bias: low complexity. 9 helical membrane passes run 270–290 (IFLI…PLEW), 312–332 (LWIW…FLID), 345–365 (VSFH…LSTL), 393–413 (IVLT…IQNF), 425–445 (ELYM…LYFF), 457–477 (WMVV…SFLW), 480–500 (WSVV…WWAI), 520–540 (LRWL…GFII), and 546–566 (AVLY…FLLV).

It belongs to the major facilitator superfamily. MFSD6 family.

It localises to the membrane. In Xenopus laevis (African clawed frog), this protein is Major facilitator superfamily domain-containing protein 6-like protein B (mfsd6l-b).